We begin with the raw amino-acid sequence, 128 residues long: Small ribosomal subunit protein uS14m (128 aa).

It belongs to the universal ribosomal protein uS14 family. As to quaternary structure, component of the mitochondrial small ribosomal subunit (mt-SSU). Mature mammalian 55S mitochondrial ribosomes consist of a small (28S) and a large (39S) subunit. The 28S small subunit contains a 12S ribosomal RNA (12S mt-rRNA) and 30 different proteins. The 39S large subunit contains a 16S rRNA (16S mt-rRNA), a copy of mitochondrial valine transfer RNA (mt-tRNA(Val)), which plays an integral structural role, and 52 different proteins. Interacts with LIAT1.

It is found in the mitochondrion. The polypeptide is Small ribosomal subunit protein uS14m (Homo sapiens (Human)).